Reading from the N-terminus, the 665-residue chain is GRB2-associated-binding protein 2 (665 aa).

A Phosphoserine modification is found at S2. Positions D8–G119 constitute a PH domain. A disordered region spans residues R131 to P183. 10 positions are modified to phosphoserine: S135, S142, S143, S149, S150, S160, S165, S211, S220, and S261. Polar residues predominate over residues S160–L170. The residue at position 262 (T262) is a Phosphothreonine. Y263 carries the phosphotyrosine modification. Position 275 is a phosphothreonine (T275). Phosphoserine occurs at positions 278 and 282. T284 carries the post-translational modification Phosphothreonine. Y290 carries the phosphotyrosine modification. A Phosphothreonine modification is found at T328. Disordered stretches follow at residues T340–V442 and P491–L517. Residues P348 to P355 carry the SH3-binding motif. S365 is modified (phosphoserine). 2 positions are modified to phosphothreonine: T382 and T388. S402 is subject to Phosphoserine. At T405 the chain carries Phosphothreonine. The span at G412–S423 shows a compositional bias: low complexity. Residues S420 and S423 each carry the phosphoserine modification. The residue at position 441 (Y441) is a Phosphotyrosine. An SH3-binding motif is present at residues P499–P508. S532 is modified (phosphoserine). Polar residues-rich tracts occupy residues S548–S566 and N578–S600. The segment at S548 to D631 is disordered. At S612 the chain carries Phosphoserine. Y632 is modified (phosphotyrosine). Polar residues predominate over residues T646 to P659. The interval T646–L665 is disordered.

It belongs to the GAB family. In terms of assembly, part of a complex composed of EEIG1, TNFRSF11A/RANK, PLCG2, GAB2, TEC and BTK; complex formation increases in the presence of TNFSF11/RANKL. Interacts with HCK. Interacts with SHC1; may mediate interaction with receptors. Interacts with SYK. Interacts with PI-3 kinase. Interacts with GRB2 (via SH3 2 domain). Interacts (phosphorylated) with PTPN11. Interacts with TNFRSF11A (via cytoplasmic domain). Interacts (phosphorylated) with 14-3-3 family proteins SFN, YWHAB, YWHAE, YWHAG, YWHAH, YWHAQ and YWHAZ; prevents interaction with GRB2 and attenuates GAB2 signaling. Post-translationally, phosphorylated upon EGF stimulation. Phosphorylated on tyrosine residues by HCK upon IL6 signaling. Phosphorylated on tyrosine residue(s) by the thrombopoietin receptor (TPOR), stem cell factor receptor (SCFR), and T-cell and B-cell antigen receptors, gp130, IL-2R and IL-3R. Phosphorylated upon stimulation of TNFRSF11A/RANK by TNFSF11/RANKL. In terms of processing, dephosphorylated by PTPN11.

It is found in the cytoplasm. Its subcellular location is the cell membrane. It localises to the membrane raft. Its function is as follows. Adapter protein which acts downstream of several membrane receptors including cytokine, antigen, hormone, cell matrix and growth factor receptors to regulate multiple signaling pathways. Regulates osteoclast differentiation mediating the TNFRSF11A/RANK signaling. In allergic response, it plays a role in mast cells activation and degranulation through PI-3-kinase regulation. Also involved in the regulation of cell proliferation and hematopoiesis. The sequence is that of GRB2-associated-binding protein 2 (Gab2) from Rattus norvegicus (Rat).